We begin with the raw amino-acid sequence, 211 residues long: Ubiquitin-conjugating enzyme E2 S (211 aa).

A UBC core domain is found at 11–157 (HIIRQVYKEV…ARLMTEIHAQ (147 aa)). C95 serves as the catalytic Glycyl thioester intermediate. The tract at residues 157 to 211 (QGSSLRGKDPTDPCSSASATLVSGDGPMAKKHAGDRDKKLAAKKKTDKKRALRRL) is disordered. The segment covering 197–211 (AAKKKTDKKRALRRL) has biased composition (basic residues).

It belongs to the ubiquitin-conjugating enzyme family.

The catalysed reaction is S-ubiquitinyl-[E1 ubiquitin-activating enzyme]-L-cysteine + [E2 ubiquitin-conjugating enzyme]-L-cysteine = [E1 ubiquitin-activating enzyme]-L-cysteine + S-ubiquitinyl-[E2 ubiquitin-conjugating enzyme]-L-cysteine.. The protein operates within protein modification; protein ubiquitination. Catalyzes the covalent attachment of ubiquitin to other proteins. Acts as an essential factor of the anaphase promoting complex/cyclosome (APC/C), a cell cycle-regulated ubiquitin ligase that controls progression through mitosis. Acts by specifically elongating 'Lys-11'-linked polyubiquitin chains initiated by the E2 enzyme ube2c/ubch10 on APC/C substrates, enhancing the degradation of APC/C substrates by the proteasome and promoting mitotic exit. The polypeptide is Ubiquitin-conjugating enzyme E2 S (ube2s) (Xenopus tropicalis (Western clawed frog)).